The following is a 624-amino-acid chain: Probable pectinesterase/pectinesterase inhibitor 47 (624 aa).

The signal sequence occupies residues 1-19; that stretch reads MQTHSSSLVFLALLCLSWA. The disordered stretch occupies residues 24–88; it reads PTRPPSQPPS…PSPLPPNIAC (65 aa). Positions 25 to 84 are enriched in pro residues; it reads TRPPSQPPSHPPIQPSSQPPTQPPSQPPTQPPTQPPSHPPTQPPTPPPSQSPSQPSPLPP. Residues 74 to 236 form a pectinesterase inhibitor 47 region; sequence QSPSQPSPLP…TRLYSVSLGL (163 aa). 4 N-linked (GlcNAc...) asparagine glycosylation sites follow: asparagine 225, asparagine 330, asparagine 369, and asparagine 376. Residues 307-606 form a pectinesterase 47 region; that stretch reads AVTVGPYETD…FTVYNFTLGD (300 aa). Threonine 385 is a binding site for substrate. A glycan (N-linked (GlcNAc...) asparagine) is linked at asparagine 387. A substrate-binding site is contributed by glutamine 415. Aspartate 438 functions as the Proton donor; for pectinesterase activity in the catalytic mechanism. A disulfide bond links cysteine 452 and cysteine 472. Aspartate 459 functions as the Nucleophile; for pectinesterase activity in the catalytic mechanism. The N-linked (GlcNAc...) asparagine glycan is linked to asparagine 505. 2 residues coordinate substrate: arginine 527 and tryptophan 529. Residues asparagine 555, asparagine 596, and asparagine 601 are each glycosylated (N-linked (GlcNAc...) asparagine).

It in the N-terminal section; belongs to the PMEI family. The protein in the C-terminal section; belongs to the pectinesterase family.

It is found in the secreted. It localises to the cell wall. It carries out the reaction [(1-&gt;4)-alpha-D-galacturonosyl methyl ester](n) + n H2O = [(1-&gt;4)-alpha-D-galacturonosyl](n) + n methanol + n H(+). Its pathway is glycan metabolism; pectin degradation; 2-dehydro-3-deoxy-D-gluconate from pectin: step 1/5. Its function is as follows. Acts in the modification of cell walls via demethylesterification of cell wall pectin. This is Probable pectinesterase/pectinesterase inhibitor 47 (PME47) from Arabidopsis thaliana (Mouse-ear cress).